Here is a 108-residue protein sequence, read N- to C-terminus: Large ribosomal subunit protein uL23 (108 aa).

This sequence belongs to the universal ribosomal protein uL23 family. In terms of assembly, part of the 50S ribosomal subunit. Contacts protein L29, and trigger factor when it is bound to the ribosome.

One of the early assembly proteins it binds 23S rRNA. One of the proteins that surrounds the polypeptide exit tunnel on the outside of the ribosome. Forms the main docking site for trigger factor binding to the ribosome. The sequence is that of Large ribosomal subunit protein uL23 from Leptothrix cholodnii (strain ATCC 51168 / LMG 8142 / SP-6) (Leptothrix discophora (strain SP-6)).